Here is a 2207-residue protein sequence, read N- to C-terminus: MWNNIELLTSDDTGSGCLSVGSRKENVTALYQADLLGKISSEKTSLSPKIQAFSLSHGFIIVADQSVILLDSICRSLQLFLIFDTDVDVVGLCQEGKFLFVGERSGNFHLIYVTSKQTLFTKAFVEKALDESQRTYRNLIIEKDGSNEGTYYMLLLTNNGFFYITNLQLSQIEQAIENTDLDSAKKLQGQFKCSFISTENYHSCLSLVASQSGTFASKTSVIIGGTGSCAFSKWEPDSTKKEMSLKNFVGTDIIKGAKSFQLIDNLLFVLDTDNVLSLWDAYTLTPVWNWPSLPVEQFVLTTEADSPSSVTWQGITNLKLVTLTATAKEKMRSLIIYSLPSMETLYSLEVSSVSSLVQTGISTDTIYLLEGIHKNDPNLCEDSVSDLVLRYLTEVLPENRLSRLLHKHRFAEAESFAIQFGLDVELVYKVKSNDMLEKLALISSDKSEQSKWQQLVDEAKENLCKIQDDDFVVNFCLKAQWVTYETTQEMLSYAKTRLMKKEDRALPASSDAFMEVLKAHAKLTTFYGAFGPEKFSGSSWIEFLNNEDDLRDVFLQLSEGNFACAQYLWLRHRADFESKFDVKMLENLLNSISTQFPLENLCSWFKNEVIPFVRRIVPEGQNILAKWLEQASRNLELTDKANWPENGLQLAEVFFTAEKTDRFGFASSWHWISLDYQNTEEVRQLRTLVSKLRELIILHRKYNCKLALSDFEKENATTVVFRMFDRVSAPELIPSVLEKSVRVYIREQNLQEEELLLLYIEDLLKRCSSKSMTLFDTAWEAKAMAVIRCLSDTDLIFDAVLKIMYKAVVPWSAAVEQLVKQHLEMDHPKVKLLQESYKLMEMKKLLRGYGIREVNLLNKEIMRVIRYILKQDIPSSLEDALKVAQGYRLSDDEIYSLRIIDLIDREQGGDCLLLLKSLPAAEAEKTAERVIIWARLALQEEPDGSEEDKAWRISVAKTSVDILKILCDIRKDNLQKKDESEEFLKRFQMVASLQENFEVFLPFEDYSNTALVAGLREQYIKAQEAAQAEHKHRGPPGPTPARGTHLSIKSKLHRQALALQVSEQELEAELTLRALKDGKVVAALSKCRDLLKHYCNADTGRLLFVVCQKLCQMLADDVPMVAPGGLSLPSEIHDLACHAVTICSPDYLLDVLELSKYTLTAVELCRQCQMDDCGMLMKAALGTHKDPYEEWSFSDFFSEDGIVLESQVVLPVIYELISSVMPPAESKRHPLDSISLPYCSTSEGENRILPLVSSISALLRSLQECSQWELALRFVVGSFGTCLQHSMSNVMSISLSKQLLGKNTLANSRHIIMELKEKSITFIRENATTLLHKVFNCRVVDLDLALAYCTLLPQKDVFDNLWKFIDKAWQNYDKILALSLVGSQLANLYQDIETGLWFHELSIDAKWGIRLGKLGISFQPAFRQNFLTKKDLIKALVNNIDMDTSLILEYCSTFQLDSDAALRLFIETLLRNTSSQSQGDAAPESTKHQHSKLLAKATELVPLLKNTKDLVISLSEILYKLDPYDYEMIDVVLKVLEQANEKITSVNINQALNLLRHLKSYRRISPPVDHEYQYALEHMITLPPAAHTRLPFHLILFGTAQNFWKILSSELSEESLPTLLLIAKLMKFSLDTLYVSTAKHLFEKNLKPKLLKSAQARSSTLMSKEVDKLMQTLESYLLSIVNPEWAVAIAISLTQEVPEGPFKMSSLKFCLYLAERWLQNIPPQDETCEKAKALQKKLCLQVRLSGTEAVLIAHKLNDQEYLRVIGKPAHLIVSLYEHPSISERLCTTSGKDYPDIHTAAKEIAEVNEVNLEKIWDMLLEKWLCPSTVPSEKASEFFELEEDEVLHRVVYLLQARPVDYCSRMLFVFATSATSTLGMRQLTFAHKARALQCLLYLADKETIESLFKKPIKEMKSYLKCITFLASFETLNIPITYELFCNSPKEGMIKGLWKNHSHEPMAVRLVAELCLEYKIYDLQLWNGLLQKLLGFNMIPYLRKVLSCISSIHSLWQVPYFSKAWQRVIQIPLLSASCPLRPSQLADCCDSLVAILECPVSDDLDMMGVAKQYVQLDLPAFALTCLTLMPHSEKRHQQIKNFLNSCDARIILQQIEEHMNTGQLAGFSHQIGSLVLNHVVNKKEFGILAKTKYFQLLKCHVINTGNVTELVNYLANDFSVDEASALINEYSKHCGKPVPADAAPCEILQTFLGGS.

Threonine 13 bears the Phosphothreonine mark. At serine 15 the chain carries Phosphoserine. The tract at residues 1024 to 1045 (EAAQAEHKHRGPPGPTPARGTH) is disordered.

In terms of assembly, interacts with ZW10. This interaction is required for stable association with the kinetochore. Component of the RZZ complex composed of KNTC1/ROD, ZW10 and ZWILCH.

It localises to the cytoplasm. Its subcellular location is the nucleus. It is found in the chromosome. The protein localises to the centromere. The protein resides in the kinetochore. It localises to the cytoskeleton. Its subcellular location is the spindle. In terms of biological role, essential component of the mitotic checkpoint, which prevents cells from prematurely exiting mitosis. Required for the assembly of the dynein-dynactin and MAD1-MAD2 complexes onto kinetochores. Its function related to the spindle assembly machinery is proposed to depend on its association in the mitotic RZZ complex. The sequence is that of Kinetochore-associated protein 1 (Kntc1) from Mus musculus (Mouse).